The following is a 32-amino-acid chain: MEAFAYVLILTLAVVTLFFAVAFRDPPKFDRK.

The chain crosses the membrane as a helical span at residues 3–23 (AFAYVLILTLAVVTLFFAVAF).

The protein belongs to the PsbT family. PSII is composed of 1 copy each of membrane proteins PsbA, PsbB, PsbC, PsbD, PsbE, PsbF, PsbH, PsbI, PsbJ, PsbK, PsbL, PsbM, PsbT, PsbX, PsbY, Psb30/Ycf12, peripheral proteins PsbO, CyanoQ (PsbQ), PsbU, PsbV and a large number of cofactors. It forms dimeric complexes.

It is found in the cellular thylakoid membrane. Its function is as follows. Found at the monomer-monomer interface of the photosystem II (PS II) dimer, plays a role in assembly and dimerization of PSII. PSII is a light-driven water plastoquinone oxidoreductase, using light energy to abstract electrons from H(2)O, generating a proton gradient subsequently used for ATP formation. This is Photosystem II reaction center protein T from Prochlorococcus marinus (strain MIT 9301).